Reading from the N-terminus, the 471-residue chain is Light-independent protochlorophyllide reductase subunit N (471 aa).

[4Fe-4S] cluster is bound by residues cysteine 22, cysteine 47, and cysteine 107.

Belongs to the BchN/ChlN family. As to quaternary structure, protochlorophyllide reductase is composed of three subunits; ChlL, ChlN and ChlB. Forms a heterotetramer of two ChlB and two ChlN subunits. [4Fe-4S] cluster is required as a cofactor.

Its subcellular location is the plastid. The protein resides in the chloroplast. The catalysed reaction is chlorophyllide a + oxidized 2[4Fe-4S]-[ferredoxin] + 2 ADP + 2 phosphate = protochlorophyllide a + reduced 2[4Fe-4S]-[ferredoxin] + 2 ATP + 2 H2O. The protein operates within porphyrin-containing compound metabolism; chlorophyll biosynthesis (light-independent). Functionally, component of the dark-operative protochlorophyllide reductase (DPOR) that uses Mg-ATP and reduced ferredoxin to reduce ring D of protochlorophyllide (Pchlide) to form chlorophyllide a (Chlide). This reaction is light-independent. The NB-protein (ChlN-ChlB) is the catalytic component of the complex. This chain is Light-independent protochlorophyllide reductase subunit N, found in Huperzia lucidula (Shining clubmoss).